Here is a 164-residue protein sequence, read N- to C-terminus: UBA-like domain-containing protein 2 (164 aa).

Ser-2 carries the N-acetylserine modification. The disordered stretch occupies residues 144 to 164; it reads PPGASQGGAPQKAMAAMDGQR.

The protein belongs to the UBALD family.

This chain is UBA-like domain-containing protein 2 (Ubald2), found in Mus musculus (Mouse).